The primary structure comprises 134 residues: Cystatin-1 (134 aa).

Positions 1-17 (MKAIYLILTVLCGFSAS) are cleaved as a signal peptide. The region spanning 21 to 116 (GGWRDKDVDD…CTAIIWTRSW (96 aa)) is the Cystatin domain. The short motif at 65-69 (QVVSG) is the Secondary area of contact element. 2 cysteine pairs are disulfide-bonded: C83-C96 and C107-C127.

The protein belongs to the cystatin family. Expressed by the venom gland.

The protein localises to the secreted. Its function is as follows. Inhibits various C1 cysteine proteases. This protein has no toxic activity and its function in the venom is unknown. It may play a role as a housekeeping or regulatory protein. This Chilobrachys guangxiensis (Chinese earth tiger tarantula) protein is Cystatin-1.